The sequence spans 347 residues: GTPase Obg (347 aa).

The region spanning 1–158 (MFIDNVKLVL…LSVRLELKLI (158 aa)) is the Obg domain. One can recognise an OBG-type G domain in the interval 159-339 (ADVGLVGFPN…LKFMLLEEVK (181 aa)). GTP is bound by residues 165–172 (GFPNVGKS), 190–194 (FTTLT), 212–215 (DIPG), 280–283 (SKSD), and 320–322 (SSL). Mg(2+) is bound by residues Ser-172 and Thr-192.

The protein belongs to the TRAFAC class OBG-HflX-like GTPase superfamily. OBG GTPase family. As to quaternary structure, monomer. Requires Mg(2+) as cofactor.

It localises to the cytoplasm. Functionally, an essential GTPase which binds GTP, GDP and possibly (p)ppGpp with moderate affinity, with high nucleotide exchange rates and a fairly low GTP hydrolysis rate. Plays a role in control of the cell cycle, stress response, ribosome biogenesis and in those bacteria that undergo differentiation, in morphogenesis control. In Campylobacter lari (strain RM2100 / D67 / ATCC BAA-1060), this protein is GTPase Obg.